Here is a 228-residue protein sequence, read N- to C-terminus: Deoxyribose-phosphate aldolase (228 aa).

The active-site Proton donor/acceptor is the Asp-96. Lys-157 (schiff-base intermediate with acetaldehyde) is an active-site residue. The active-site Proton donor/acceptor is Lys-185.

It belongs to the DeoC/FbaB aldolase family. DeoC type 1 subfamily.

It is found in the cytoplasm. It catalyses the reaction 2-deoxy-D-ribose 5-phosphate = D-glyceraldehyde 3-phosphate + acetaldehyde. It functions in the pathway carbohydrate degradation; 2-deoxy-D-ribose 1-phosphate degradation; D-glyceraldehyde 3-phosphate and acetaldehyde from 2-deoxy-alpha-D-ribose 1-phosphate: step 2/2. Functionally, catalyzes a reversible aldol reaction between acetaldehyde and D-glyceraldehyde 3-phosphate to generate 2-deoxy-D-ribose 5-phosphate. The sequence is that of Deoxyribose-phosphate aldolase from Cyanothece sp. (strain PCC 7425 / ATCC 29141).